The following is a 636-amino-acid chain: MDSSSESYHKIEVIYLLSKGAEQDDHPHMIQVQYPSHQHAPTLRDVKFRLTALRGRGMPDSYSWSYKRSYKGTFIWCDVFDGDDILPLSESGEYVLKALEVMDSSEDACDRGVEHLGQEVARVLPTNRNGTSANFNEVHSIDDVRRVAPNKCVEVKRQFMGGSVHNNMTGKANRNEQGDAYGTTSRVPDPENCIENKRCLESMTGSDSSRSNISTDESYGLSFERDLKMDMKEMPACPATRSTDHGGMSSLAPRSSRLSRREYVKCKTWAVKEDENAALNHGRLSRRSSDTLRDSNSVGNTVDIPSSPVTRPCFPGDPLIFMLKKATKFHRSQLCRKAEVEGSPCATVGKPSSSRHTSKIRHGSGPLKAYHGPHSSKSATQNSRPVTYETSAKESERDIRSLCQFLGASNVGSVSQTINKEGTKKTGSARHIQAGSNDDFDFARHKEVAVDISEKLLLPEQVTGRYEKPSRMSKQLINKLDSKSLNMVTRPAVRLSSKLGSGQASESFSPASPHAPQRPIVSRPQEKAVNQLSLVAGFEDPQITSSDTSNAGLSCTSKASGLKAVKLPRNASNNCYFSLTIPDLEKRAADTKVYPWRENSAFNSIELYSGTLQKVDLAINTSFNGATLGELASGGC.

Residues 9-103 (HKIEVIYLLS…YVLKALEVMD (95 aa)) are DIX-like oligomerization domain. 4 disordered regions span residues 164–188 (VHNN…SRVP), 281–304 (HGRL…TVDI), 340–393 (VEGS…TSAK), and 499–524 (LGSG…VSRP). Polar residues-rich tracts occupy residues 375–390 (SSKS…TYET) and 499–510 (LGSGQASESFSP).

This sequence belongs to the SOSEKI family. Homodimer. Forms long polymer filaments with other SOKs proteins polymers crucial for polar localization and biological activity.

The protein resides in the cell membrane. Its function is as follows. SOSEKI proteins locally interpret global polarity cues and can influence cell division orientation to coordinate cell polarization relative to body axes. In Physcomitrium patens (Spreading-leaved earth moss), this protein is Protein SOSEKI 2.